We begin with the raw amino-acid sequence, 372 residues long: Aryl-hydrocarbon-interacting protein-like 1 (372 aa).

A PPIase FKBP-type domain is found at 53 to 145 (RQVDQPMHII…DLDELQKEPQ (93 aa)). TPR repeat units follow at residues 178–211 (VPVL…LRNL), 230–263 (NTLT…HPGI), and 264–297 (VKAY…EPSM). Positions 315–372 (KQEEERLRCRNMLSQGATQPPTEPPAEPHTAPPAELSTGPPAEPPAELPLSPGHSLQH) are disordered. Over residues 335–345 (PTEPPAEPHTA) the composition is skewed to pro residues.

In terms of assembly, interacts with NUB1.

The protein localises to the cytoplasm. It is found in the nucleus. Its function is as follows. May be important in protein trafficking and/or protein folding and stabilization. The protein is Aryl-hydrocarbon-interacting protein-like 1 (AIPL1) of Papio cynocephalus (Yellow baboon).